Consider the following 251-residue polypeptide: Small ribosomal subunit protein uS2 (251 aa).

This sequence belongs to the universal ribosomal protein uS2 family.

The chain is Small ribosomal subunit protein uS2 from Nitrosomonas eutropha (strain DSM 101675 / C91 / Nm57).